A 606-amino-acid polypeptide reads, in one-letter code: Membrane protein insertase YidC (606 aa).

Residues 8–28 (LILATALSFIVILVWFVLFPP) form a helical membrane-spanning segment. Positions 33–59 (MPLTGETSTELTPDAATGSLPSVTSDT) are disordered. 6 helical membrane-spanning segments follow: residues 116 to 136 (IVTMLSPVGSPGAYYALYGWA), 348 to 368 (FIDSIDWGWFFFLTKPIFFLL), 374 to 394 (FIGNMGWAIIGLTLIIKAILL), 448 to 468 (LPILLQIPIFFSLYKVIFVTI), 506 to 526 (SIMALIFIGILPLLLGISMWL), and 542 to 562 (IFAWMPWVFMFMLGGFASGLV).

Belongs to the OXA1/ALB3/YidC family. Type 1 subfamily. As to quaternary structure, interacts with the Sec translocase complex via SecD. Specifically interacts with transmembrane segments of nascent integral membrane proteins during membrane integration.

The protein localises to the cell inner membrane. In terms of biological role, required for the insertion and/or proper folding and/or complex formation of integral membrane proteins into the membrane. Involved in integration of membrane proteins that insert both dependently and independently of the Sec translocase complex, as well as at least some lipoproteins. Aids folding of multispanning membrane proteins. In Roseobacter denitrificans (strain ATCC 33942 / OCh 114) (Erythrobacter sp. (strain OCh 114)), this protein is Membrane protein insertase YidC.